The primary structure comprises 325 residues: ADP-L-glycero-D-manno-heptose-6-epimerase (325 aa).

NADP(+) contacts are provided by residues 10–11 (FI), 31–32 (DD), lysine 38, and 75–79 (EGACS). Catalysis depends on tyrosine 139, which acts as the Proton acceptor. Lysine 143 is a binding site for NADP(+). Asparagine 167 lines the substrate pocket. The NADP(+) site is built by valine 168 and lysine 176. The active-site Proton acceptor is lysine 176. Substrate is bound by residues serine 178, histidine 185, 199 to 202 (FEGS), arginine 212, and tyrosine 285.

It belongs to the NAD(P)-dependent epimerase/dehydratase family. HldD subfamily. In terms of assembly, homopentamer. It depends on NADP(+) as a cofactor.

The enzyme catalyses ADP-D-glycero-beta-D-manno-heptose = ADP-L-glycero-beta-D-manno-heptose. The protein operates within nucleotide-sugar biosynthesis; ADP-L-glycero-beta-D-manno-heptose biosynthesis; ADP-L-glycero-beta-D-manno-heptose from D-glycero-beta-D-manno-heptose 7-phosphate: step 4/4. Functionally, catalyzes the interconversion between ADP-D-glycero-beta-D-manno-heptose and ADP-L-glycero-beta-D-manno-heptose via an epimerization at carbon 6 of the heptose. This Azoarcus sp. (strain BH72) protein is ADP-L-glycero-D-manno-heptose-6-epimerase.